A 497-amino-acid polypeptide reads, in one-letter code: Signal recognition particle receptor FtsY (497 aa).

Disordered stretches follow at residues 1–63 and 79–130; these read MAKE…TEAE and AESE…EWQA. The segment covering 87 to 96 has biased composition (low complexity); the sequence is EAEVVAQPEP. Residues 300-307, 382-386, and 446-449 contribute to the GTP site; these read GVNGVGKT, DTAGR, and TKLD.

This sequence belongs to the GTP-binding SRP family. FtsY subfamily. As to quaternary structure, part of the signal recognition particle protein translocation system, which is composed of SRP and FtsY. SRP is a ribonucleoprotein composed of Ffh and a 4.5S RNA molecule. Binds to SecY. In terms of processing, proteolytically cleaved. The cleavage may regulate function and subcellular location of FtsY. Full-length FtsY is found primarily associated with the membrane, while cleaved protein is predominantly present in the cytoplasm.

Its subcellular location is the cell inner membrane. The protein resides in the cytoplasm. The catalysed reaction is GTP + H2O = GDP + phosphate + H(+). With respect to regulation, conformation of the Ffh-FtsY complex and regulation of its GTPase activity are modulated by the 4.5S RNA. Formation of the FfH-FtsY complex leads to a mutual stimulation of both GTPases. Involved in targeting and insertion of nascent membrane proteins into the cytoplasmic membrane. Acts as a receptor for the complex formed by the signal recognition particle (SRP) and the ribosome-nascent chain (RNC). Interaction with SRP-RNC leads to the transfer of the RNC complex to the Sec translocase for insertion into the membrane, the hydrolysis of GTP by both Ffh and FtsY, and the dissociation of the SRP-FtsY complex into the individual components. The polypeptide is Signal recognition particle receptor FtsY (Escherichia coli (strain K12)).